We begin with the raw amino-acid sequence, 238 residues long: Protein CPn_0658/CP_0089/CPj0658/CpB0684 (238 aa).

This sequence belongs to the chlamydial CPn_0658/CT_538/TC_0825 family.

The polypeptide is Protein CPn_0658/CP_0089/CPj0658/CpB0684 (Chlamydia pneumoniae (Chlamydophila pneumoniae)).